A 302-amino-acid polypeptide reads, in one-letter code: MKWFEVAIKTVEEAEDAISNILYDLGANGVVIEDDEILKYPNSWDYIDENQFPKRNFAVVRAYFPESVNISELIFNIEERLKDASQYLNIGEGKIDISEVDEKDWANEWKKYYKPVEIGNIVIVPSWESYPNTKDKTVIKLDPGMAFGTGTHESTMLCLEAVQKYIKPGFDVIDIGTGSGILAIAAKKLGANRVLAVDIDDVAVKVARENAALNNVEIEIKQNDLVFGIEEKFDIAIANIIADIIIKLAKDIKNVLKEYGLFISSGIIEDRLDDVIKSFKENLLEVVEVKKLNNWCLVVARK.

S-adenosyl-L-methionine contacts are provided by T155, G176, D198, and N239.

The protein belongs to the methyltransferase superfamily. PrmA family.

The protein localises to the cytoplasm. It carries out the reaction L-lysyl-[protein] + 3 S-adenosyl-L-methionine = N(6),N(6),N(6)-trimethyl-L-lysyl-[protein] + 3 S-adenosyl-L-homocysteine + 3 H(+). In terms of biological role, methylates ribosomal protein L11. This chain is Ribosomal protein L11 methyltransferase, found in Caldicellulosiruptor saccharolyticus (strain ATCC 43494 / DSM 8903 / Tp8T 6331).